Reading from the N-terminus, the 310-residue chain is Tagatose-6-phosphate kinase (310 aa).

This sequence belongs to the carbohydrate kinase PfkB family. LacC subfamily.

The catalysed reaction is D-tagatofuranose 6-phosphate + ATP = D-tagatofuranose 1,6-bisphosphate + ADP + H(+). Its pathway is carbohydrate metabolism; D-tagatose 6-phosphate degradation; D-glyceraldehyde 3-phosphate and glycerone phosphate from D-tagatose 6-phosphate: step 1/2. The chain is Tagatose-6-phosphate kinase from Staphylococcus aureus (strain Mu3 / ATCC 700698).